The following is a 194-amino-acid chain: Large ribosomal subunit protein bL25 (194 aa).

It belongs to the bacterial ribosomal protein bL25 family. CTC subfamily. In terms of assembly, part of the 50S ribosomal subunit; part of the 5S rRNA/L5/L18/L25 subcomplex. Contacts the 5S rRNA. Binds to the 5S rRNA independently of L5 and L18.

This is one of the proteins that binds to the 5S RNA in the ribosome where it forms part of the central protuberance. This chain is Large ribosomal subunit protein bL25, found in Thermobifida fusca (strain YX).